Consider the following 187-residue polypeptide: Signal peptidase complex catalytic subunit SEC11 (187 aa).

Topologically, residues 1–18 (MLSSLSPYMANPRNTLSQ) are cytoplasmic. The helical; Signal-anchor for type II membrane protein transmembrane segment at 19 to 39 (VLNFGLVLSSAFMVWKALSVI) threads the bilayer. Residues 40–187 (TNSASPVVVV…MGLMVMLQRE (148 aa)) lie on the Lumenal side of the membrane. Catalysis depends on charge relay system residues Ser-53 and His-92. Asn-125 carries an N-linked (GlcNAc...) asparagine glycan. Residue Asp-129 is the Charge relay system of the active site. A C-terminal short (CTS) helix region spans residues 173–184 (VLLGFMGLMVML).

It belongs to the peptidase S26B family. In terms of assembly, component of the signal peptidase complex (SPC) composed of a catalytic subunit SEC11 and three accessory subunits SPC1, SPC2 and SPC3. The complex induces a local thinning of the ER membrane which is used to measure the length of the signal peptide (SP) h-region of protein substrates. This ensures the selectivity of the complex towards h-regions shorter than 18-20 amino acids. SPC associates with the translocon complex.

Its subcellular location is the endoplasmic reticulum membrane. The enzyme catalyses Cleavage of hydrophobic, N-terminal signal or leader sequences from secreted and periplasmic proteins.. Catalytic component of the signal peptidase complex (SPC) which catalyzes the cleavage of N-terminal signal sequences from nascent proteins as they are translocated into the lumen of the endoplasmic reticulum. Specifically cleaves N-terminal signal peptides that contain a hydrophobic alpha-helix (h-region) shorter than 18-20 amino acids. This is Signal peptidase complex catalytic subunit SEC11 (SEC11) from Ajellomyces capsulatus (strain NAm1 / WU24) (Darling's disease fungus).